Consider the following 621-residue polypeptide: UvrABC system protein C (621 aa).

Residues 20–98 enclose the GIY-YIG domain; it reads TAPGVYRMYA…IKSLTPRYNV (79 aa). The region spanning 207-242 is the UVR domain; it reads DLLAEELIQAMQVASEHLEFEQAARLRDLLTSLRSM.

This sequence belongs to the UvrC family. In terms of assembly, interacts with UvrB in an incision complex.

Its subcellular location is the cytoplasm. Functionally, the UvrABC repair system catalyzes the recognition and processing of DNA lesions. UvrC both incises the 5' and 3' sides of the lesion. The N-terminal half is responsible for the 3' incision and the C-terminal half is responsible for the 5' incision. This Xylella fastidiosa (strain M23) protein is UvrABC system protein C.